The primary structure comprises 365 residues: tRNA/tmRNA (uracil-C(5))-methyltransferase (365 aa).

S-adenosyl-L-methionine-binding residues include glutamine 189, tyrosine 217, asparagine 222, glutamate 238, and aspartate 298. The active-site Nucleophile is the cysteine 323. Residue glutamate 357 is the Proton acceptor of the active site.

This sequence belongs to the class I-like SAM-binding methyltransferase superfamily. RNA M5U methyltransferase family. TrmA subfamily.

The catalysed reaction is uridine(54) in tRNA + S-adenosyl-L-methionine = 5-methyluridine(54) in tRNA + S-adenosyl-L-homocysteine + H(+). It catalyses the reaction uridine(341) in tmRNA + S-adenosyl-L-methionine = 5-methyluridine(341) in tmRNA + S-adenosyl-L-homocysteine + H(+). Dual-specificity methyltransferase that catalyzes the formation of 5-methyluridine at position 54 (m5U54) in all tRNAs, and that of position 341 (m5U341) in tmRNA (transfer-mRNA). This Shewanella sp. (strain W3-18-1) protein is tRNA/tmRNA (uracil-C(5))-methyltransferase.